Reading from the N-terminus, the 340-residue chain is Sulfotransferase 2B1 (340 aa).

67–72 contacts 3'-phosphoadenylyl sulfate; the sequence is KSGTNW. Residues tryptophan 95 and tryptophan 100 each contribute to the substrate site. Catalysis depends on histidine 122, which acts as the Proton acceptor. 3'-phosphoadenylyl sulfate contacts are provided by residues arginine 144, serine 152, tyrosine 207, 241-246, and 271-273; these read SAFAAM and RKG. The segment at 301 to 340 is disordered; that stretch reads LPSFPWDRSAEDGSPDGETEPSPSPSPGLASDDPNPGSSQ.

This sequence belongs to the sulfotransferase 1 family. As to expression, isoform 1 is expressed in skin and testis. Higher level of isoform 2 expressed in skin and intestine, moderate level in the kidney, low level in liver, stomach and placenta.

The protein resides in the cytoplasm. The protein localises to the cytosol. It is found in the microsome. Its subcellular location is the nucleus. The enzyme catalyses an alcohol + 3'-phosphoadenylyl sulfate = an alkyl sulfate + adenosine 3',5'-bisphosphate + H(+). It carries out the reaction pregnenolone + 3'-phosphoadenylyl sulfate = pregnenolone sulfate + adenosine 3',5'-bisphosphate + H(+). The catalysed reaction is 3beta-hydroxyandrost-5-en-17-one + 3'-phosphoadenylyl sulfate = dehydroepiandrosterone 3-sulfate + adenosine 3',5'-bisphosphate + H(+). It catalyses the reaction cholesterol + 3'-phosphoadenylyl sulfate = cholesterol sulfate + adenosine 3',5'-bisphosphate + H(+). Functionally, sulfotransferase that utilizes 3'-phospho-5'-adenylyl sulfate (PAPS) as sulfonate donor to catalyze the sulfate conjugation. Sulfonation increases the water solubility of most compounds, and therefore their renal excretion, but it can also result in bioactivation to form active metabolites. Sulfonates cholesterol. Catalyzes sulfation of the 3beta-hydroxyl groups of steroids, such as, pregnenolone and dehydroepiandrosterone (DHEA). Conjugates efficiently cholesterol but has a greater affinity for pregnenolone sulfation. Does not show high activity with DHEA. Plays a role in epidermal cholesterol metabolism and in the regulation of epidermal proliferation and differentiation. In terms of biological role, prefers pregnenolone over DHEA as a substrate and does not sulfate cholesterol. This is Sulfotransferase 2B1 from Rattus norvegicus (Rat).